The following is a 160-amino-acid chain: Cytochrome b6-f complex subunit 4 (160 aa).

The next 3 helical transmembrane spans lie at 36 to 56 (LLYM…GLSV), 95 to 115 (LLGV…PFIE), and 131 to 151 (ILFL…TFPI).

Belongs to the cytochrome b family. PetD subfamily. As to quaternary structure, the 4 large subunits of the cytochrome b6-f complex are cytochrome b6, subunit IV (17 kDa polypeptide, petD), cytochrome f and the Rieske protein, while the 4 small subunits are petG, petL, petM and petN. The complex functions as a dimer. Post-translationally, the N-terminus is blocked.

It localises to the plastid. The protein localises to the chloroplast thylakoid membrane. In terms of biological role, component of the cytochrome b6-f complex, which mediates electron transfer between photosystem II (PSII) and photosystem I (PSI), cyclic electron flow around PSI, and state transitions. The protein is Cytochrome b6-f complex subunit 4 of Chlamydomonas reinhardtii (Chlamydomonas smithii).